A 507-amino-acid polypeptide reads, in one-letter code: MVTIRADEISNIIRERIEQYNREVTIVNTGTVLQVGDGIARIYGLDEVMAGELVEFEEGTIGIALNLESNNVGVVLMGDGLMIQEGSSVKATGKIAQIPVSEAYLGRVINALANPIDGRGKIAASESRLIESPAPGIISRRSVYEPLQTGLIAIDSMIPIGRGQRELIIGDRQTGKTAVATDTILNQQGQNVICVYVAIGQKASSVAQVVTSLQERGAMEYTIVVAETADSPATLQYLAPYTGAALAEYFMYREQHTLIIYDDLSKQAQAYRQMSLLLRRPPGREAYPGDVFYLHSRLLERAAKLSSQLGEGSMTALPIVETQAGDVSAYIPTNVISITDGQIFLSADLFNSGIRPAINVGISVSRVGSAAQIKAMKQVAGKLKLELAQFAELEAFAQFSSDLDKATQNQLARGQRLRELLKQSQSAPLTVEEQIMTIYTGTNGYLDGLEIGQVRKFLVQLRTYLKTNKPQFQEIISSTKTLTPEAESLLKEGIQEQLERFLLQEKV.

170 to 177 contacts ATP; that stretch reads GDRQTGKT. The residue at position 257 (threonine 257) is a Phosphothreonine.

This sequence belongs to the ATPase alpha/beta chains family. As to quaternary structure, F-type ATPases have 2 components, CF(1) - the catalytic core - and CF(0) - the membrane proton channel. CF(1) has five subunits: alpha(3), beta(3), gamma(1), delta(1), epsilon(1). CF(0) has four main subunits: a, b, b' and c.

It is found in the plastid. The protein resides in the chloroplast thylakoid membrane. It carries out the reaction ATP + H2O + 4 H(+)(in) = ADP + phosphate + 5 H(+)(out). Produces ATP from ADP in the presence of a proton gradient across the membrane. The alpha chain is a regulatory subunit. The polypeptide is ATP synthase subunit alpha, chloroplastic (Lepidium virginicum (Virginia pepperweed)).